The sequence spans 280 residues: Killer cell lectin-like receptor 7 (280 aa).

At methionine 1–lysine 44 the chain is on the cytoplasmic side. A helical; Signal-anchor for type II membrane protein membrane pass occupies residues leucine 45–isoleucine 66. The Extracellular segment spans residues threonine 67–histidine 280. Asparagine 104 carries N-linked (GlcNAc...) asparagine glycosylation. Residues glycine 156 to leucine 275 enclose the C-type lectin domain. Cystine bridges form between cysteine 163–cysteine 168, cysteine 181–cysteine 269, cysteine 185–cysteine 271, and cysteine 250–cysteine 263. N-linked (GlcNAc...) asparagine glycosylation occurs at asparagine 239.

Homodimer; disulfide-linked.

The protein resides in the membrane. Receptor on natural killer (NK) cells for class I MHC. This is Killer cell lectin-like receptor 7 (Klra7) from Mus musculus (Mouse).